A 337-amino-acid polypeptide reads, in one-letter code: CMP-N-acetylneuraminate-beta-galactosamide-alpha-2,3-sialyltransferase 1 (337 aa).

Residues 1–4 (MRRK) lie on the Cytoplasmic side of the membrane. The chain crosses the membrane as a helical; Signal-anchor for type II membrane protein span at residues 5-25 (TLKYLTFFLLFIFLTSFVLNY). The Lumenal portion of the chain corresponds to 26–337 (SNTGVPSAWF…INKIRIFKGR (312 aa)). 3 disulfides stabilise this stretch: Cys-56-Cys-61, Cys-58-Cys-136, and Cys-139-Cys-278. An N-linked (GlcNAc...) asparagine glycan is attached at Asn-76. Residue Gln-102 coordinates substrate. Asn-109 carries an N-linked (GlcNAc...) asparagine glycan. Positions 144, 167, 227, 263, 267, 287, 296, and 313 each coordinate substrate. Asn-320 carries an N-linked (GlcNAc...) asparagine glycan.

This sequence belongs to the glycosyltransferase 29 family. The soluble form derives from the membrane form by proteolytic processing. As to expression, highly expressed in submaxillary gland and to a much lesser extent in liver, lung, kidney, heart and brain.

Its subcellular location is the golgi apparatus. The protein localises to the golgi stack membrane. The protein resides in the trans-Golgi network membrane. It localises to the secreted. It catalyses the reaction a beta-D-galactosyl-(1-&gt;3)-N-acetyl-alpha-D-galactosaminyl derivative + CMP-N-acetyl-beta-neuraminate = an N-acetyl-alpha-neuraminyl-(2-&gt;3)-beta-D-galactosyl-(1-&gt;3)-N-acetyl-alpha-D-galactosaminyl derivative + CMP + H(+). The enzyme catalyses a ganglioside GM1 (d18:1(4E)) + CMP-N-acetyl-beta-neuraminate = a ganglioside GD1a (d18:1(4E)) + CMP + H(+). It carries out the reaction ganglioside GM1 (d18:1(4E)/18:0) + CMP-N-acetyl-beta-neuraminate = ganglioside GD1a (18:1(4E)/18:0) + CMP + H(+). The catalysed reaction is a ganglioside GA1 + CMP-N-acetyl-beta-neuraminate = a ganglioside GM1b + CMP + H(+). It catalyses the reaction a ganglioside GA1 (d18:1(4E)) + CMP-N-acetyl-beta-neuraminate = a ganglioside GM1b (d18:1(4E)) + CMP + H(+). The enzyme catalyses a ganglioside GD1b + CMP-N-acetyl-beta-neuraminate = a ganglioside GT1b + CMP + H(+). It carries out the reaction a 3-O-[beta-D-galactosyl-(1-&gt;3)-N-acetyl-alpha-D-galactosaminyl]-L-threonyl-[protein] + CMP-N-acetyl-beta-neuraminate = a 3-O-[N-acetyl-alpha-neuraminyl-(2-&gt;3)-beta-D-galactosyl-(1-&gt;3)-N-acetyl-alpha-D-galactosaminyl]-L-threonyl-[protein] + CMP + H(+). The catalysed reaction is a 3-O-[beta-D-galactosyl-(1-&gt;3)-N-acetyl-alpha-D-galactosaminyl]-L-seryl-[protein] + CMP-N-acetyl-beta-neuraminate = 3-O-[N-acetyl-alpha-neuraminyl-(2-&gt;3)-beta-D-galactosyl-(1-&gt;3)-N-acetyl-alpha-D-galactosaminyl]-L-seryl-[protein] + CMP + H(+). It participates in protein modification; protein glycosylation. The protein operates within glycolipid biosynthesis. Functionally, a beta-galactoside alpha2-&gt;3 sialyltransferase involved in terminal sialylation of glycoproteins and glycolipids. Catalyzes the transfer of sialic acid (N-acetyl-neuraminic acid; Neu5Ac) from the nucleotide sugar donor CMP-Neu5Ac onto acceptor Galbeta-(1-&gt;3)-GalNAc-terminated glycoconjugates through an alpha2-3 linkage. Adds sialic acid to the core 1 O-glycan, Galbeta-(1-&gt;3)-GalNAc-O-Ser/Thr, which is a major structure of mucin-type O-glycans. As part of a homeostatic mechanism that regulates CD8-positive T cell numbers, sialylates core 1 O-glycans of T cell glycoproteins, SPN/CD43 and PTPRC/CD45. Prevents premature apoptosis of thymic CD8-positive T cells prior to peripheral emigration, whereas in the secondary lymphoid organs controls the survival of CD8-positive memory T cells generated following a successful immune response. Transfers sialic acid to asialofetuin, presumably onto Galbeta-(1-&gt;3)-GalNAc-O-Ser. Sialylates GM1a, GA1 and GD1b gangliosides to form GD1a, GM1b and GT1b, respectively. This Mus musculus (Mouse) protein is CMP-N-acetylneuraminate-beta-galactosamide-alpha-2,3-sialyltransferase 1 (St3gal1).